We begin with the raw amino-acid sequence, 79 residues long: Moronecidin (79 aa).

The first 22 residues, 1–22 (MKCATLSLVLSMVVLMAEPGDA), serve as a signal peptide directing secretion. Residue glycine 44 is modified to Glycine amide. Positions 45-68 (GKAEQDQQDQQYQQDQQDQQAQQY) are disordered. A propeptide spanning residues 47 to 79 (AEQDQQDQQYQQDQQDQQAQQYQRFNRERAAFD) is cleaved from the precursor. The span at 52-68 (QDQQYQQDQQDQQAQQY) shows a compositional bias: low complexity.

In terms of tissue distribution, expressed in gill, skin, intestine, spleen, anterior kidney, and blood cells.

It localises to the secreted. Functionally, antimicrobial peptide with broad-spectrum activity against Gram-positive and Gram-negative bacteria as well as against a variety of fungi. Rapidly inactivates both channel catfish herpesvirus (ED(50)=4 uM) and frog virus 3 (ED(50)=13 uM) over a wide temperature range. Seems to disrupt the membranes by adopting an alpha helical conformation. This Morone chrysops (White bass) protein is Moronecidin.